Consider the following 234-residue polypeptide: MSVHIGAKEHEIADKILLPGDPLRAKYIAETFLEGATCYNQVRGMLGFTGTYKGHRISVQGTGMGVPSISIYVTELMQSYNVQTLIRVGTCGAIQKDVKVRDVILAMTSSTDSQMNRMTFGGIDYAPTANFDLLKTAYEIGKEKGLQLKVGSVFTADMFYNENAQFEKLARYGVLAVEMETTALYTLAAKFGRKALSVLTVSDHILTGEETTAEERQTTFNEMIEVALETAIRQ.

His4 provides a ligand contact to a purine D-ribonucleoside. Residues Gly20, Arg24, Arg43, and 87-90 (RVGT) each bind phosphate. Residues Glu162, 178–180 (EME), and 202–203 (SD) contribute to the a purine D-ribonucleoside site. Asp203 functions as the Proton donor in the catalytic mechanism.

This sequence belongs to the PNP/UDP phosphorylase family. As to quaternary structure, homohexamer; trimer of homodimers.

It carries out the reaction a purine D-ribonucleoside + phosphate = a purine nucleobase + alpha-D-ribose 1-phosphate. It catalyses the reaction a purine 2'-deoxy-D-ribonucleoside + phosphate = a purine nucleobase + 2-deoxy-alpha-D-ribose 1-phosphate. Functionally, catalyzes the reversible phosphorolytic breakdown of the N-glycosidic bond in the beta-(deoxy)ribonucleoside molecules, with the formation of the corresponding free purine bases and pentose-1-phosphate. In Anoxybacillus flavithermus (strain DSM 21510 / WK1), this protein is Purine nucleoside phosphorylase DeoD-type.